A 232-amino-acid chain; its full sequence is MPKHSKRYNEVRKLVDRNKDYDLNEAIDLAKKVATAKFDETVELHIKTNIDYRKSDQQIRSTIALPHGTGKEVKVLVFATGEKAEEAKAAGADYVGAEDLAEKIQKENFLDFDVAIATPDMMRVIGKLGKILGPRGLMPNPKAGTVTNDVASAVKEFKKGRMEVRTDKTGNLHIPVGKASFDNEKLKENIKSAYEQILNLKPAGVKGNFIKKVVLSTTMGPGIKVDPATLTQ.

The protein belongs to the universal ribosomal protein uL1 family. As to quaternary structure, part of the 50S ribosomal subunit.

Its function is as follows. Binds directly to 23S rRNA. The L1 stalk is quite mobile in the ribosome, and is involved in E site tRNA release. Protein L1 is also a translational repressor protein, it controls the translation of the L11 operon by binding to its mRNA. This is Large ribosomal subunit protein uL1 from Thermosipho africanus (strain TCF52B).